We begin with the raw amino-acid sequence, 185 residues long: UPF0397 protein AYWB_013 (185 aa).

Helical transmembrane passes span 13–33 (IGLS…PVGF), 42–62 (AFLA…VGLI), 69–89 (FFLF…IGFI), 109–129 (IVYF…FFAP), and 148–168 (FLIV…LMTI).

This sequence belongs to the UPF0397 family.

The protein resides in the cell membrane. This Aster yellows witches'-broom phytoplasma (strain AYWB) protein is UPF0397 protein AYWB_013.